The primary structure comprises 73 residues: UPF0337 protein lp_1708 (73 aa).

Basic and acidic residues-rich tracts occupy residues 1 to 35 (MSDV…REAQ) and 44 to 73 (KAKD…KSDD). Residues 1-73 (MSDVNKKFDS…KDKMKKKSDD (73 aa)) are disordered.

Belongs to the UPF0337 (CsbD) family.

This is UPF0337 protein lp_1708 from Lactiplantibacillus plantarum (strain ATCC BAA-793 / NCIMB 8826 / WCFS1) (Lactobacillus plantarum).